Reading from the N-terminus, the 99-residue chain is Small integral membrane protein 14 (99 aa).

The Lumenal segment spans residues 1–49; it reads MAEGGFDPCECVCSHEHAMRRLINLLRQSQSYCTDTECLQELPGPSGDN. Residues 50–70 form a helical membrane-spanning segment; it reads GISVTMILVAWMVIALILFLL. Over 71-99 the chain is Cytoplasmic; it reads RPPNLRGSSLPGKPTSPHNGQDPPAPPVD. Residues 78-99 are disordered; sequence SSLPGKPTSPHNGQDPPAPPVD.

Its subcellular location is the endoplasmic reticulum membrane. The sequence is that of Small integral membrane protein 14 (SMIM14) from Homo sapiens (Human).